The following is a 181-amino-acid chain: Large ribosomal subunit protein uL5 (181 aa).

Belongs to the universal ribosomal protein uL5 family. In terms of assembly, part of the 50S ribosomal subunit; part of the 5S rRNA/L5/L18/L25 subcomplex. Contacts the 5S rRNA and the P site tRNA. Forms a bridge to the 30S subunit in the 70S ribosome.

Its function is as follows. This is one of the proteins that bind and probably mediate the attachment of the 5S RNA into the large ribosomal subunit, where it forms part of the central protuberance. In the 70S ribosome it contacts protein S13 of the 30S subunit (bridge B1b), connecting the 2 subunits; this bridge is implicated in subunit movement. Contacts the P site tRNA; the 5S rRNA and some of its associated proteins might help stabilize positioning of ribosome-bound tRNAs. In Mycoplasmopsis pulmonis (strain UAB CTIP) (Mycoplasma pulmonis), this protein is Large ribosomal subunit protein uL5.